The sequence spans 129 residues: UPF0148 protein AF_2370 (129 aa).

The segment at 61 to 80 (SAAKAESEEKPPESTKPAVK) is disordered.

It belongs to the UPF0148 family.

The protein is UPF0148 protein AF_2370 of Archaeoglobus fulgidus (strain ATCC 49558 / DSM 4304 / JCM 9628 / NBRC 100126 / VC-16).